A 377-amino-acid polypeptide reads, in one-letter code: Nitric oxide reductase FlRd-NAD(+) reductase (377 aa).

It belongs to the FAD-dependent oxidoreductase family. Requires FAD as cofactor.

The protein resides in the cytoplasm. It carries out the reaction 2 reduced [nitric oxide reductase rubredoxin domain] + NAD(+) + H(+) = 2 oxidized [nitric oxide reductase rubredoxin domain] + NADH. Its pathway is nitrogen metabolism; nitric oxide reduction. In terms of biological role, one of at least two accessory proteins for anaerobic nitric oxide (NO) reductase. Reduces the rubredoxin moiety of NO reductase. The protein is Nitric oxide reductase FlRd-NAD(+) reductase of Escherichia coli O17:K52:H18 (strain UMN026 / ExPEC).